We begin with the raw amino-acid sequence, 404 residues long: N-acetylglucosamine-6-phosphate deacetylase (404 aa).

Glu-143 contacts a divalent metal cation. Ala-154–His-155 contacts substrate. His-211 and His-232 together coordinate a divalent metal cation. Residues Asn-235 to Ala-236, Arg-243, and Asp-269 to His-272 each bind substrate. Asp-294 acts as the Proton donor/acceptor in catalysis. Substrate is bound at residue Leu-328–Gly-330.

Belongs to the metallo-dependent hydrolases superfamily. NagA family. The cofactor is a divalent metal cation.

It catalyses the reaction N-acetyl-D-glucosamine 6-phosphate + H2O = D-glucosamine 6-phosphate + acetate. Its pathway is amino-sugar metabolism; N-acetylneuraminate degradation. In terms of biological role, hydrolyzes the N-glycolyl group from N-glycolylglucosamine 6-phosphate (GlcNGc-6-P) in the N-glycolylneuraminic acid (Neu5Gc) degradation pathway. The chain is N-acetylglucosamine-6-phosphate deacetylase (amdhd2) from Danio rerio (Zebrafish).